The chain runs to 209 residues: uncharacterized protein (209 aa).

3 helical membrane-spanning segments follow: residues 26–48, 147–169, and 179–196; these read LRYF…GLAV, AYLV…PFLM, and IVAA…VYLL.

It is found in the cell membrane. This is an uncharacterized protein from Archaeoglobus fulgidus (strain ATCC 49558 / DSM 4304 / JCM 9628 / NBRC 100126 / VC-16).